Consider the following 146-residue polypeptide: Copper transporter 5 (146 aa).

A helical membrane pass occupies residues 24-44 (WLSYILTLIACFVFSAFYQYL). Positions 55–74 (SSSRRAPPPPRSSSGVSAPL) are disordered. Residues 101–121 (LLMLAAMSFNGGVFIAIVVGL) traverse the membrane as a helical segment.

It belongs to the copper transporter (Ctr) (TC 1.A.56) family. SLC31A subfamily. In terms of tissue distribution, highly expressed in leaves and stems and at lower levels in roots and flowers.

It localises to the membrane. Functionally, involved in the transport of copper. The chain is Copper transporter 5 (COPT5) from Arabidopsis thaliana (Mouse-ear cress).